A 162-amino-acid polypeptide reads, in one-letter code: 2-C-methyl-D-erythritol 2,4-cyclodiphosphate synthase (162 aa).

The a divalent metal cation site is built by D10 and H12. Residues 10–12 and 36–37 each bind 4-CDP-2-C-methyl-D-erythritol 2-phosphate; these read DVH and HS. Residue H44 participates in a divalent metal cation binding. 4-CDP-2-C-methyl-D-erythritol 2-phosphate-binding positions include 58–60, 63–67, and R144; these read DIG and FSDTD.

It belongs to the IspF family. As to quaternary structure, homotrimer. A divalent metal cation serves as cofactor.

The catalysed reaction is 4-CDP-2-C-methyl-D-erythritol 2-phosphate = 2-C-methyl-D-erythritol 2,4-cyclic diphosphate + CMP. Its pathway is isoprenoid biosynthesis; isopentenyl diphosphate biosynthesis via DXP pathway; isopentenyl diphosphate from 1-deoxy-D-xylulose 5-phosphate: step 4/6. Its function is as follows. Involved in the biosynthesis of isopentenyl diphosphate (IPP) and dimethylallyl diphosphate (DMAPP), two major building blocks of isoprenoid compounds. Catalyzes the conversion of 4-diphosphocytidyl-2-C-methyl-D-erythritol 2-phosphate (CDP-ME2P) to 2-C-methyl-D-erythritol 2,4-cyclodiphosphate (ME-CPP) with a corresponding release of cytidine 5-monophosphate (CMP). This is 2-C-methyl-D-erythritol 2,4-cyclodiphosphate synthase from Burkholderia mallei (strain NCTC 10247).